The primary structure comprises 284 residues: Cytochrome P450 2C31 (284 aa).

Cysteine 229 lines the heme pocket.

This sequence belongs to the cytochrome P450 family. The cofactor is heme.

The protein localises to the endoplasmic reticulum membrane. The protein resides in the microsome membrane. The catalysed reaction is an organic molecule + reduced [NADPH--hemoprotein reductase] + O2 = an alcohol + oxidized [NADPH--hemoprotein reductase] + H2O + H(+). In terms of biological role, cytochromes P450 are a group of heme-thiolate monooxygenases. In liver microsomes, this enzyme is involved in an NADPH-dependent electron transport pathway. It oxidizes a variety of structurally unrelated compounds, including steroids, fatty acids, and xenobiotics. The polypeptide is Cytochrome P450 2C31 (CYP2C31) (Capra hircus aegagrus (Wild goat)).